The sequence spans 432 residues: Glutamyl-tRNA reductase (432 aa).

Substrate contacts are provided by residues 55-58, Ser-114, 119-121, and Gln-125; these read TCNR and ETQ. The Nucleophile role is filled by Cys-56. 194 to 199 serves as a coordination point for NADP(+); the sequence is GAGEMI.

This sequence belongs to the glutamyl-tRNA reductase family. Homodimer.

It catalyses the reaction (S)-4-amino-5-oxopentanoate + tRNA(Glu) + NADP(+) = L-glutamyl-tRNA(Glu) + NADPH + H(+). It functions in the pathway porphyrin-containing compound metabolism; protoporphyrin-IX biosynthesis; 5-aminolevulinate from L-glutamyl-tRNA(Glu): step 1/2. Catalyzes the NADPH-dependent reduction of glutamyl-tRNA(Glu) to glutamate 1-semialdehyde (GSA). The polypeptide is Glutamyl-tRNA reductase (Burkholderia lata (strain ATCC 17760 / DSM 23089 / LMG 22485 / NCIMB 9086 / R18194 / 383)).